The primary structure comprises 2313 residues: Voltage-dependent R-type calcium channel subunit alpha-1E (2313 aa).

A disordered region spans residues 1-38 (MARFGEAVVARPGSGDGDSDQSRNRQGTPVPASGQAAA). Topologically, residues 1–89 (MARFGEAVVA…KYAKKLIDWP (89 aa)) are cytoplasmic. 2 positions are modified to phosphoserine: S14 and S19. One copy of the I repeat lies at 76–354 (NIVRKYAKKL…LVLGVLSGEF (279 aa)). The helical transmembrane segment at 90–108 (PFEYMILATIIANCIVLAL) threads the bilayer. At 109-127 (EQHLPEDDKTPMSRRLEKT) the chain is on the extracellular side. A helical transmembrane segment spans residues 128-146 (EPYFIGIFCFEAGIKIVAL). Residues 147–158 (GFIFHKGSYLRN) lie on the Cytoplasmic side of the membrane. Residues 159-173 (GWNVMDFIVVLSGIL) form a helical membrane-spanning segment. Over 174–185 (ATAGTHFNTHVD) the chain is Extracellular. A helical membrane pass occupies residues 186–205 (LRTLRAVRVLRPLKLVSGIP). The Cytoplasmic portion of the chain corresponds to 206–223 (SLQIVLKSIMKAMVPLLQ). Residues 224–244 (IGLLLFFAILMFAIIGLEFYS) traverse the membrane as a helical segment. At 245 to 326 (GKLHRACFMN…NTNDALGATW (82 aa)) the chain is on the extracellular side. N254 is a glycosylation site (N-linked (GlcNAc...) asparagine). The chain crosses the membrane as a helical span at residues 327-350 (NWLYFIPLIIIGSFFVLNLVLGVL). The Cytoplasmic portion of the chain corresponds to 351–476 (SGEFAKERER…ISIRHMVKSQ (126 aa)). The binding to the beta subunit stretch occupies residues 374–391 (QQIERELNGYRAWIDKAE). D426 is a binding site for Ca(2+). S427 carries the post-translational modification Phosphoserine. S428, E430, and C432 together coordinate Ca(2+). T440 bears the Phosphothreonine mark. One copy of the II repeat lies at 462-706 (ERLLRISIRH…VFLAIAVDNL (245 aa)). Residues 477-496 (VFYWIVLSLVALNTACVAIV) traverse the membrane as a helical segment. At 497–509 (HHNQPQWLTHLLY) the chain is on the extracellular side. The chain crosses the membrane as a helical span at residues 510-529 (YAEFLFLGLFLLEMSLKMYG). The Cytoplasmic segment spans residues 530-538 (MGPRLYFHS). A helical transmembrane segment spans residues 539 to 557 (SFNCFDFGVTVGSIFEVVW). Over 558–567 (AIFRPGTSFG) the chain is Extracellular. The helical transmembrane segment at 568 to 586 (ISVLRALRLLRIFKITKYW) threads the bilayer. Over 587 to 605 (ASLRNLVVSLMSSMKSIIS) the chain is Cytoplasmic. The chain crosses the membrane as a helical span at residues 606–625 (LLFLLFLFIVVFALLGMQLF). Residues 626-678 (GGRFNFNDGTPSANFDTFPAAIMTVFQILTGEDWNEVMYNGIRSQGGVSSGMW) are Extracellular-facing. Residues 679–703 (SAIYFIVLTLFGNYTLLNVFLAIAV) form a helical membrane-spanning segment. At 704-1148 (DNLANAQELT…TNPIRRACHY (445 aa)) the chain is on the cytoplasmic side. Residues 729-774 (LQKAKEVSPMSAPNMPSIERDRRRRHHMSMWEPRSSHLRERRRRHH) form a disordered region. 5 positions are modified to phosphoserine: S736, S745, S793, S815, and S855. The disordered stretch occupies residues 851–984 (SRGGSLKGDG…EERAQDLRRT (134 aa)). Over residues 866-875 (ALDNQRTPLS) the composition is skewed to polar residues. Positions 913 to 926 (RHRQSQRRSRHRRV) are enriched in basic residues. Residues 933–945 (SSSASRSRSASQE) show a composition bias toward low complexity. S947 bears the Phosphoserine mark. Positions 955–983 (EGEKDHELRGNHGAKEPTIQEERAQDLRR) are enriched in basic and acidic residues. Phosphoserine is present on S1097. A disordered region spans residues 1103–1125 (EIREDEEEVEKKKQKKEKRETGK). An III repeat occupies 1140–1426 (NPIRRACHYI…IFVALIIITF (287 aa)). Residues 1149 to 1165 (IVNLRYFEMCILLVIAA) form a helical membrane-spanning segment. At 1166–1189 (SSIALAAEDPVLTNSERNKVLRYF) the chain is on the extracellular side. Residues 1190–1209 (DYVFTGVFTFEMVIKMIDQG) traverse the membrane as a helical segment. The Cytoplasmic segment spans residues 1210 to 1217 (LILQDGSY). A helical transmembrane segment spans residues 1218-1240 (FRDLWNILDFVVVVGALVAFALA). Over 1241–1254 (NALGTNKGRDIKTI) the chain is Extracellular. The chain crosses the membrane as a helical span at residues 1255 to 1272 (KSLRVLRVLRPLKTIKRL). Residues 1273–1291 (PKLKAVFDCVVTSLKNVFN) are Cytoplasmic-facing. The helical transmembrane segment at 1292–1311 (ILIVYKLFMFIFAVIAVQLF) threads the bilayer. Residues 1312–1398 (KGKFFYCTDS…RGPSRSNRME (87 aa)) are Extracellular-facing. A helical transmembrane segment spans residues 1399-1422 (MSIFYVVYFVVFPFFFVNIFVALI). Residues 1423 to 1479 (IITFQEQGDKMMEECSLEKNERACIDFAISAKPLTRYMPQNRHTFQYRVWHFVVSPS) are Cytoplasmic-facing. An IV repeat occupies 1463-1726 (NRHTFQYRVW…LFVAVIMDNF (264 aa)). A helical membrane pass occupies residues 1480–1498 (FEYTIMAMIALNTVVLMMK). Residues 1499–1513 (YYSAPCTYELALKYL) are Extracellular-facing. The helical transmembrane segment at 1514–1533 (NIAFTMVFSLECVLKVIAFG) threads the bilayer. The Cytoplasmic segment spans residues 1534–1541 (FLNYFRDT). A helical membrane pass occupies residues 1542–1560 (WNIFDFITVIGSITEIILT). Over 1561–1571 (DSKLVNTSGFN) the chain is Extracellular. 2 N-linked (GlcNAc...) asparagine glycosylation sites follow: N1566 and N1571. The chain crosses the membrane as a helical span at residues 1572–1590 (MSFLKLFRAARLIKLLRQG). Residues 1591–1609 (YTIRILLWTFVQSFKALPY) lie on the Cytoplasmic side of the membrane. The helical transmembrane segment at 1610-1629 (VCLLIAMLFFIYAIIGMQVF) threads the bilayer. At 1630–1698 (GNIKLDEESH…NENERCGTDL (69 aa)) the chain is on the extracellular side. The chain crosses the membrane as a helical span at residues 1699–1724 (AYVYFVSFIFFCSFLMLNLFVAVIMD). Residues 1725-2313 (NFEYLTRDSS…LSDTEEDDKC (589 aa)) are Cytoplasmic-facing. The EF-hand domain maps to 1739-1774 (HHLDEFVRVWAEYDRAACGRIHYTEMYEMLTLMSPP). Residues D1752, R1758, and E1763 each coordinate Ca(2+). 3 disordered regions span residues 1970 to 2170 (VSEL…RPLL), 2206 to 2225 (CLTESSNSPHPQQSQHASPQ), and 2263 to 2295 (SNTIGSAPPLRHSWQMPNGHYRRRRRGGPGPGM). The segment covering 2012–2023 (TDPSSMRRSFST) has biased composition (polar residues). Low complexity predominate over residues 2055-2064 (HSSLRLSAHR). A compositionally biased stretch (basic and acidic residues) spans 2065–2085 (LNSDSGHKSDTHRSGGRERGR). Phosphoserine occurs at positions 2094 and 2113. Over residues 2101–2118 (NSEERGTQADWESPERRQ) the composition is skewed to basic and acidic residues. Residues 2129 to 2152 (TPNRQGTGSLSESSIPSVSDTSTP) are compositionally biased toward polar residues. Over residues 2210-2225 (SSNSPHPQQSQHASPQ) the composition is skewed to low complexity.

Belongs to the calcium channel alpha-1 subunit (TC 1.A.1.11) family. CACNA1E subfamily. In terms of assembly, interacts with EFHC1. Voltage-dependent calcium channels are multisubunit complexes, consisting of alpha-1, alpha-2, beta and delta subunits in a 1:1:1:1 ratio. The channel activity is directed by the pore-forming and voltage-sensitive alpha-1 subunit. In many cases, this subunit is sufficient to generate voltage-sensitive calcium channel activity. The auxiliary subunits beta and alpha-2/delta linked by a disulfide bridge regulate the channel activity. In terms of tissue distribution, expressed in neuronal tissues and in kidney.

The protein resides in the membrane. The enzyme catalyses Ca(2+)(in) = Ca(2+)(out). Its function is as follows. Voltage-sensitive calcium channels (VSCC) mediate the entry of calcium ions into excitable cells. They are also involved in a variety of calcium-dependent processes, including muscle contraction, hormone or neurotransmitter release, gene expression, cell motility, cell division and cell death. The isoform alpha-1E gives rise to R-type calcium currents. R-type calcium channels belong to the 'high-voltage activated' (HVA) group and are blocked by nickel. They are however insensitive to dihydropyridines (DHP). Calcium channels containing alpha-1E subunit could be involved in the modulation of firing patterns of neurons which is important for information processing. Voltage-sensitive calcium channels (VSCC) mediate the entry of calcium ions into excitable cells. They are also involved in a variety of calcium-dependent processes, including muscle contraction, hormone or neurotransmitter release, gene expression, cell motility, cell division and cell death. The isoform alpha-1E gives rise to R-type calcium currents. This Homo sapiens (Human) protein is Voltage-dependent R-type calcium channel subunit alpha-1E (CACNA1E).